Here is a 66-residue protein sequence, read N- to C-terminus: Large ribosomal subunit protein bL33c (66 aa).

It belongs to the bacterial ribosomal protein bL33 family.

Its subcellular location is the plastid. The protein resides in the chloroplast. The sequence is that of Large ribosomal subunit protein bL33c (rpl33) from Arabidopsis thaliana (Mouse-ear cress).